A 429-amino-acid polypeptide reads, in one-letter code: Serine--tRNA ligase (429 aa).

235-237 (TAE) contacts L-serine. 266–268 (RSE) contributes to the ATP binding site. Glu-289 serves as a coordination point for L-serine. 353-356 (EISS) provides a ligand contact to ATP. Position 389 (Ser-389) interacts with L-serine.

This sequence belongs to the class-II aminoacyl-tRNA synthetase family. Type-1 seryl-tRNA synthetase subfamily. In terms of assembly, homodimer. The tRNA molecule binds across the dimer.

The protein resides in the cytoplasm. The enzyme catalyses tRNA(Ser) + L-serine + ATP = L-seryl-tRNA(Ser) + AMP + diphosphate + H(+). It carries out the reaction tRNA(Sec) + L-serine + ATP = L-seryl-tRNA(Sec) + AMP + diphosphate + H(+). It functions in the pathway aminoacyl-tRNA biosynthesis; selenocysteinyl-tRNA(Sec) biosynthesis; L-seryl-tRNA(Sec) from L-serine and tRNA(Sec): step 1/1. Functionally, catalyzes the attachment of serine to tRNA(Ser). Is also able to aminoacylate tRNA(Sec) with serine, to form the misacylated tRNA L-seryl-tRNA(Sec), which will be further converted into selenocysteinyl-tRNA(Sec). This Haemophilus influenzae (strain PittGG) protein is Serine--tRNA ligase.